Reading from the N-terminus, the 425-residue chain is Glutamate-1-semialdehyde 2,1-aminomutase (425 aa).

Lys-265 bears the N6-(pyridoxal phosphate)lysine mark.

The protein belongs to the class-III pyridoxal-phosphate-dependent aminotransferase family. HemL subfamily. Homodimer. Pyridoxal 5'-phosphate serves as cofactor.

Its subcellular location is the cytoplasm. The enzyme catalyses (S)-4-amino-5-oxopentanoate = 5-aminolevulinate. Its pathway is porphyrin-containing compound metabolism; protoporphyrin-IX biosynthesis; 5-aminolevulinate from L-glutamyl-tRNA(Glu): step 2/2. In Desulfatibacillum aliphaticivorans, this protein is Glutamate-1-semialdehyde 2,1-aminomutase.